A 298-amino-acid chain; its full sequence is Acetyl-coenzyme A carboxylase carboxyl transferase subunit beta (298 aa).

The disordered stretch occupies residues 1–21; it reads MNQEVKSGKVLSPSTPWTQRP. The C4-type zinc finger occupies 20-67; that stretch reads RPVPGIEVADEQQTLKATFTEPTIECPECHALVTRTAISFNAYVCPQC. Residues 41-298 enclose the CoA carboxyltransferase N-terminal domain; sequence PTIECPECHA…RLVSKLMNLP (258 aa). C45, C48, C64, and C67 together coordinate Zn(2+).

The protein belongs to the AccD/PCCB family. As to quaternary structure, acetyl-CoA carboxylase is a heterohexamer composed of biotin carboxyl carrier protein (AccB), biotin carboxylase (AccC) and two subunits each of ACCase subunit alpha (AccA) and ACCase subunit beta (AccD). The cofactor is Zn(2+).

It localises to the cytoplasm. It carries out the reaction N(6)-carboxybiotinyl-L-lysyl-[protein] + acetyl-CoA = N(6)-biotinyl-L-lysyl-[protein] + malonyl-CoA. The protein operates within lipid metabolism; malonyl-CoA biosynthesis; malonyl-CoA from acetyl-CoA: step 1/1. Functionally, component of the acetyl coenzyme A carboxylase (ACC) complex. Biotin carboxylase (BC) catalyzes the carboxylation of biotin on its carrier protein (BCCP) and then the CO(2) group is transferred by the transcarboxylase to acetyl-CoA to form malonyl-CoA. This chain is Acetyl-coenzyme A carboxylase carboxyl transferase subunit beta, found in Acinetobacter baumannii (strain SDF).